A 267-amino-acid chain; its full sequence is tRNA pseudouridine synthase A (267 aa).

Catalysis depends on Asp-51, which acts as the Nucleophile. Tyr-109 is a substrate binding site.

This sequence belongs to the tRNA pseudouridine synthase TruA family. Homodimer.

It catalyses the reaction uridine(38/39/40) in tRNA = pseudouridine(38/39/40) in tRNA. Functionally, formation of pseudouridine at positions 38, 39 and 40 in the anticodon stem and loop of transfer RNAs. The chain is tRNA pseudouridine synthase A from Staphylococcus aureus (strain USA300).